Here is a 184-residue protein sequence, read N- to C-terminus: ATP synthase subunit b, chloroplastic (184 aa).

Residues 27-49 (LATNLINLSVVLGVLIFFGKGVL) traverse the membrane as a helical segment.

This sequence belongs to the ATPase B chain family. F-type ATPases have 2 components, F(1) - the catalytic core - and F(0) - the membrane proton channel. F(1) has five subunits: alpha(3), beta(3), gamma(1), delta(1), epsilon(1). F(0) has four main subunits: a(1), b(1), b'(1) and c(10-14). The alpha and beta chains form an alternating ring which encloses part of the gamma chain. F(1) is attached to F(0) by a central stalk formed by the gamma and epsilon chains, while a peripheral stalk is formed by the delta, b and b' chains.

Its subcellular location is the plastid. It is found in the chloroplast thylakoid membrane. Its function is as follows. F(1)F(0) ATP synthase produces ATP from ADP in the presence of a proton or sodium gradient. F-type ATPases consist of two structural domains, F(1) containing the extramembraneous catalytic core and F(0) containing the membrane proton channel, linked together by a central stalk and a peripheral stalk. During catalysis, ATP synthesis in the catalytic domain of F(1) is coupled via a rotary mechanism of the central stalk subunits to proton translocation. In terms of biological role, component of the F(0) channel, it forms part of the peripheral stalk, linking F(1) to F(0). The polypeptide is ATP synthase subunit b, chloroplastic (Nymphaea alba (White water-lily)).